We begin with the raw amino-acid sequence, 423 residues long: Putative competence-damage inducible protein (423 aa).

Belongs to the CinA family.

This Streptococcus pyogenes serotype M3 (strain ATCC BAA-595 / MGAS315) protein is Putative competence-damage inducible protein.